We begin with the raw amino-acid sequence, 243 residues long: MASINLFLFAFLLLLSHASASTVIFYNKCKHPVWPGIQPSAGQNLLAGGGFKLPANKAHSLQLPPLWSGRFWGRHGCTFDRSGRGHCATGDCGGSLSCNGAGGEPPATLAEITLGPELDFYDVSLVDGYNLAMSIMPVKGSGQCSYAGCVSDLNQMCPVGLQVRSRNGKRVVACKSACSAFNSPQYCCTGLFGNPQSCKPTAYSKIFKVACPKAYSYAYDDPTSIATCSKANYIVTFCPHHRH.

The N-terminal stretch at 1–20 (MASINLFLFAFLLLLSHASA) is a signal peptide. 8 disulfides stabilise this stretch: Cys29–Cys238, Cys77–Cys87, Cys92–Cys98, Cys144–Cys228, Cys149–Cys211, Cys157–Cys174, Cys178–Cys187, and Cys188–Cys198.

It belongs to the thaumatin family.

This Arabidopsis thaliana (Mouse-ear cress) protein is Thaumatin-like protein.